The sequence spans 337 residues: Diacylglycerol acyltransferase/mycolyltransferase Ag85A (337 aa).

The first 42 residues, 1–42 (MKLVDRFRGAATGTSRRLMVGAVGAALLSGLVGFVGGSATAS), serve as a signal peptide directing secretion. 85 to 86 (MR) serves as a coordination point for substrate. Residues 101 to 111 (FEWYYQSGISV) are fibronectin-binding. C130 and C135 are disulfide-bonded. Residues S169 and D197 each contribute to the substrate site. Catalysis depends on S169, which acts as the Nucleophile. The active site involves E273. Residues 275–278 (FVRT), K282, and 305–307 (HSW) contribute to the substrate site. The active site involves H305.

The protein belongs to the mycobacterial A85 antigen family. Homodimer.

It localises to the secreted. Its subcellular location is the cell wall. The protein resides in the cytoplasm. It catalyses the reaction an acyl-CoA + a 1,2-diacyl-sn-glycerol = a triacyl-sn-glycerol + CoA. It carries out the reaction 2 alpha,alpha'-trehalose 6-mycolate = alpha,alpha'-trehalose 6,6'-bismycolate + alpha,alpha-trehalose. Functionally, the antigen 85 proteins (FbpA, FbpB, FbpC) are responsible for the high affinity of mycobacteria for fibronectin, a large adhesive glycoprotein, which facilitates the attachment of M.tuberculosis to murine alveolar macrophages (AMs). They also help to maintain the integrity of the cell wall by catalyzing the transfer of mycolic acids to cell wall arabinogalactan, and through the synthesis of alpha,alpha-trehalose dimycolate (TDM, cord factor). They catalyze the transfer of a mycoloyl residue from one molecule of alpha,alpha-trehalose monomycolate (TMM) to another TMM, leading to the formation of TDM. FbpA mediates triacylglycerol (TAG) formation with long-chain acyl-CoA as the acyl donor and 1,2-dipalmitoyl-sn-glycerol (1,2-dipalmitin) as the acyl acceptor. It has a preference for C26:0-CoA over C18:1-CoA. In Mycobacterium ulcerans, this protein is Diacylglycerol acyltransferase/mycolyltransferase Ag85A (fbpA).